The primary structure comprises 361 residues: Chorismate synthase (361 aa).

NADP(+)-binding residues include Arg-48 and Arg-54. Residues 125–127 (RSS), 238–239 (NA), Gly-278, 293–297 (KPTSS), and Arg-319 each bind FMN.

This sequence belongs to the chorismate synthase family. In terms of assembly, homotetramer. It depends on FMNH2 as a cofactor.

The enzyme catalyses 5-O-(1-carboxyvinyl)-3-phosphoshikimate = chorismate + phosphate. Its pathway is metabolic intermediate biosynthesis; chorismate biosynthesis; chorismate from D-erythrose 4-phosphate and phosphoenolpyruvate: step 7/7. Functionally, catalyzes the anti-1,4-elimination of the C-3 phosphate and the C-6 proR hydrogen from 5-enolpyruvylshikimate-3-phosphate (EPSP) to yield chorismate, which is the branch point compound that serves as the starting substrate for the three terminal pathways of aromatic amino acid biosynthesis. This reaction introduces a second double bond into the aromatic ring system. The polypeptide is Chorismate synthase (Escherichia coli O1:K1 / APEC).